A 545-amino-acid chain; its full sequence is Chaperonin GroEL 1 (545 aa).

Residues 29 to 32, 86 to 90, Gly413, 477 to 479, and Asp493 each bind ATP; these read TLGP, DGTTT, and NAA.

Belongs to the chaperonin (HSP60) family. As to quaternary structure, forms a cylinder of 14 subunits composed of two heptameric rings stacked back-to-back. Interacts with the co-chaperonin GroES.

It localises to the cytoplasm. It catalyses the reaction ATP + H2O + a folded polypeptide = ADP + phosphate + an unfolded polypeptide.. In terms of biological role, together with its co-chaperonin GroES, plays an essential role in assisting protein folding. The GroEL-GroES system forms a nano-cage that allows encapsulation of the non-native substrate proteins and provides a physical environment optimized to promote and accelerate protein folding. This Arthrobacter sp. (strain FB24) protein is Chaperonin GroEL 1.